Reading from the N-terminus, the 157-residue chain is 2-C-methyl-D-erythritol 2,4-cyclodiphosphate synthase (157 aa).

A divalent metal cation-binding residues include aspartate 8 and histidine 10. 4-CDP-2-C-methyl-D-erythritol 2-phosphate contacts are provided by residues 8–10 (DVH) and 34–35 (HS). Histidine 42 contacts a divalent metal cation. 4-CDP-2-C-methyl-D-erythritol 2-phosphate contacts are provided by residues 56 to 58 (DIG), 61 to 65 (FPDTD), 132 to 135 (TTTE), phenylalanine 139, and arginine 142.

The protein belongs to the IspF family. In terms of assembly, homotrimer. The cofactor is a divalent metal cation.

It catalyses the reaction 4-CDP-2-C-methyl-D-erythritol 2-phosphate = 2-C-methyl-D-erythritol 2,4-cyclic diphosphate + CMP. Its pathway is isoprenoid biosynthesis; isopentenyl diphosphate biosynthesis via DXP pathway; isopentenyl diphosphate from 1-deoxy-D-xylulose 5-phosphate: step 4/6. Functionally, involved in the biosynthesis of isopentenyl diphosphate (IPP) and dimethylallyl diphosphate (DMAPP), two major building blocks of isoprenoid compounds. Catalyzes the conversion of 4-diphosphocytidyl-2-C-methyl-D-erythritol 2-phosphate (CDP-ME2P) to 2-C-methyl-D-erythritol 2,4-cyclodiphosphate (ME-CPP) with a corresponding release of cytidine 5-monophosphate (CMP). The sequence is that of 2-C-methyl-D-erythritol 2,4-cyclodiphosphate synthase from Pseudomonas putida (strain W619).